Consider the following 592-residue polypeptide: Aspartate--tRNA ligase (592 aa).

Residue Glu-173 participates in L-aspartate binding. Residues 197 to 200 are aspartate; it reads QLFK. Arg-219 is an L-aspartate binding site. Residues 219 to 221 and Gln-228 each bind ATP; that span reads RDE. An L-aspartate-binding site is contributed by His-448. Glu-482 contributes to the ATP binding site. Arg-489 contacts L-aspartate. 534 to 537 provides a ligand contact to ATP; sequence GLDR.

Belongs to the class-II aminoacyl-tRNA synthetase family. Type 1 subfamily. As to quaternary structure, homodimer.

The protein localises to the cytoplasm. It carries out the reaction tRNA(Asp) + L-aspartate + ATP = L-aspartyl-tRNA(Asp) + AMP + diphosphate. In terms of biological role, catalyzes the attachment of L-aspartate to tRNA(Asp) in a two-step reaction: L-aspartate is first activated by ATP to form Asp-AMP and then transferred to the acceptor end of tRNA(Asp). This is Aspartate--tRNA ligase from Shewanella baltica (strain OS223).